The chain runs to 197 residues: 22.7 kDa class IV heat shock protein (197 aa).

An N-terminal signal peptide occupies residues 1-28; that stretch reads MSLKPLNMLLVPFLLLILAADFPLKAKA. One can recognise a sHSP domain in the interval 68–184; sequence PSITLSHARV…GPRMVSIVEE (117 aa). The short motif at 194 to 197 is the Prevents secretion from ER element; the sequence is DELK.

This sequence belongs to the small heat shock protein (HSP20) family. Forms oligomeric structures.

The protein resides in the endoplasmic reticulum lumen. The chain is 22.7 kDa class IV heat shock protein (HSP22.7) from Pisum sativum (Garden pea).